Reading from the N-terminus, the 507-residue chain is RNA polymerase I-specific transcription initiation factor RRN11 (507 aa).

Over residues 37–47 the composition is skewed to polar residues; that stretch reads KSTTTDSLPTP. Disordered stretches follow at residues 37-76 and 89-124; these read KSTT…LQQK and GEIY…SDEE. The span at 97–108 shows a compositional bias: acidic residues; it reads SETDSQEEETEE. Residues 109 to 124 are compositionally biased toward basic and acidic residues; sequence GGEHDTGIDKEDSDEE.

In terms of assembly, component of the core factor (CF) complex, which consists of RRN6, RRN7 and RRN11. The CF heterotrimer may further dimerize to form a hexamer. RRN11 interacts with RRN6, RRN7 and SPT15.

The protein localises to the nucleus. It localises to the nucleolus. Functionally, acts as a component of the core factor (CF) complex which is essential for the initiation of rDNA transcription by RNA polymerase I. After binding of UAF (upstream activation factor) to an upstream element of the promoter, CF is recruited in a SPT15/TBP-dependent manner to form a preinitiation complex. The chain is RNA polymerase I-specific transcription initiation factor RRN11 (RRN11) from Saccharomyces cerevisiae (strain ATCC 204508 / S288c) (Baker's yeast).